Consider the following 95-residue polypeptide: Large ribosomal subunit protein bL27 (95 aa).

A propeptide spanning residues 1–6 is cleaved from the precursor; the sequence is MFLQLF.

This sequence belongs to the bacterial ribosomal protein bL27 family. Post-translationally, the N-terminus is cleaved by ribosomal processing cysteine protease Prp.

The protein is Large ribosomal subunit protein bL27 of Symbiobacterium thermophilum (strain DSM 24528 / JCM 14929 / IAM 14863 / T).